Consider the following 415-residue polypeptide: Very late expression factor 1 (415 aa).

Positions 171–357 constitute a Tyr recombinase domain; the sequence is REIINTILDC…DESDDNDEDD (187 aa). Residues arginine 214, lysine 242, arginine 307, and histidine 330 contribute to the active site. The disordered stretch occupies residues 339-415; that stretch reads YLNKYDVGVD…GDDADLLSFN (77 aa). The active-site O-(3'-phospho-DNA)-tyrosine intermediate is tyrosine 343. Positions 346–363 are enriched in acidic residues; the sequence is GVDESDDNDEDDDDDEND. Positions 375–404 are enriched in low complexity; sequence NISNYDINNSSSGNSSSNNTSGNDFNNNIS.

This sequence belongs to the 'phage' integrase family.

In terms of biological role, involved in very late gene activation. The chain is Very late expression factor 1 (VLF-1) from Heliothis zea nuclear polyhedrosis virus (HzSNPV).